We begin with the raw amino-acid sequence, 432 residues long: 3-phosphoshikimate 1-carboxyvinyltransferase (432 aa).

3-phosphoshikimate is bound by residues lysine 22, serine 23, and arginine 27. Lysine 22 lines the phosphoenolpyruvate pocket. The phosphoenolpyruvate site is built by glycine 96 and arginine 127. Serine 173, serine 174, glutamine 175, serine 201, aspartate 316, asparagine 339, and lysine 343 together coordinate 3-phosphoshikimate. Residue glutamine 175 coordinates phosphoenolpyruvate. The Proton acceptor role is filled by aspartate 316. Arginine 347, arginine 391, and lysine 416 together coordinate phosphoenolpyruvate.

It belongs to the EPSP synthase family. In terms of assembly, monomer.

Its subcellular location is the cytoplasm. The enzyme catalyses 3-phosphoshikimate + phosphoenolpyruvate = 5-O-(1-carboxyvinyl)-3-phosphoshikimate + phosphate. It functions in the pathway metabolic intermediate biosynthesis; chorismate biosynthesis; chorismate from D-erythrose 4-phosphate and phosphoenolpyruvate: step 6/7. Its function is as follows. Catalyzes the transfer of the enolpyruvyl moiety of phosphoenolpyruvate (PEP) to the 5-hydroxyl of shikimate-3-phosphate (S3P) to produce enolpyruvyl shikimate-3-phosphate and inorganic phosphate. The sequence is that of 3-phosphoshikimate 1-carboxyvinyltransferase from Actinobacillus pleuropneumoniae serotype 7 (strain AP76).